The sequence spans 710 residues: Aminopeptidase P2 (710 aa).

The transit peptide at 1-79 (MIPLTLSSPS…IRKAQTKVVV (79 aa)) directs the protein to the chloroplast. Residues Arg-147 and His-486 each contribute to the a peptide site. Residues Asp-506, Asp-517, and His-580 each contribute to the Mn(2+) site. A peptide-binding residues include His-580, His-589, and Glu-614. Residues Glu-614 and Glu-628 each coordinate Mn(2+).

The protein belongs to the peptidase M24B family. Homodimer. It depends on Mn(2+) as a cofactor.

It is found in the plastid. The protein resides in the chloroplast. It carries out the reaction Release of any N-terminal amino acid, including proline, that is linked to proline, even from a dipeptide or tripeptide.. In terms of biological role, catalyzes the removal of a penultimate prolyl residue from the N-termini of peptides, such as Arg-Pro-Pro. The protein is Aminopeptidase P2 of Arabidopsis thaliana (Mouse-ear cress).